The following is a 316-amino-acid chain: Pantothenate kinase (316 aa).

An ATP-binding site is contributed by 95 to 102 (GSVAVGKS).

The protein belongs to the prokaryotic pantothenate kinase family.

It is found in the cytoplasm. It catalyses the reaction (R)-pantothenate + ATP = (R)-4'-phosphopantothenate + ADP + H(+). It functions in the pathway cofactor biosynthesis; coenzyme A biosynthesis; CoA from (R)-pantothenate: step 1/5. In Hamiltonella defensa subsp. Acyrthosiphon pisum (strain 5AT), this protein is Pantothenate kinase.